A 199-amino-acid chain; its full sequence is Superoxide dismutase [Mn/Fe] (199 aa).

4 residues coordinate Fe(3+): H27, H81, D161, and H165. Residues H27, H81, D161, and H165 each contribute to the Mn(2+) site.

Belongs to the iron/manganese superoxide dismutase family. Homodimer. The cofactor is Mn(2+). Requires Fe(3+) as cofactor.

It carries out the reaction 2 superoxide + 2 H(+) = H2O2 + O2. Functionally, destroys superoxide anion radicals which are normally produced within the cells and which are toxic to biological systems. Catalyzes the dismutation of superoxide anion radicals into O2 and H2O2 by successive reduction and oxidation of the transition metal ion at the active site. This chain is Superoxide dismutase [Mn/Fe] (sodA), found in Staphylococcus epidermidis (strain ATCC 35984 / DSM 28319 / BCRC 17069 / CCUG 31568 / BM 3577 / RP62A).